The chain runs to 311 residues: Malate dehydrogenase (311 aa).

NAD(+) is bound by residues G7–G13 and D34. 2 residues coordinate substrate: R81 and R87. Residues N94 and I117 to N119 each bind NAD(+). Residues N119 and R153 each coordinate substrate. H177 serves as the catalytic Proton acceptor. M227 contributes to the NAD(+) binding site.

Belongs to the LDH/MDH superfamily. MDH type 1 family. As to quaternary structure, homodimer.

It carries out the reaction (S)-malate + NAD(+) = oxaloacetate + NADH + H(+). Catalyzes the reversible oxidation of malate to oxaloacetate. The sequence is that of Malate dehydrogenase from Shewanella baltica (strain OS155 / ATCC BAA-1091).